We begin with the raw amino-acid sequence, 350 residues long: C5a anaphylatoxin chemotactic receptor 1 (350 aa).

Residues 1–37 (MDSFDYTTPDYGHYDDKDTLDLNTPVDKTSNTLRVPD) are Extracellular-facing. Residues 10–18 (DYGHYDDKD) form a required for CHIPS binding region. Sulfotyrosine is present on residues Tyr11 and Tyr14. The tract at residues 21–30 (DLNTPVDKTS) is involved in C5a binding. A helical transmembrane segment spans residues 38–64 (ILALVIFAVVFLVGVLGNALVVWVTAF). Residues 65–69 (EAKRT) are Cytoplasmic-facing. Residues 70-93 (INAIWFLNLAVADFLSCLALPILF) traverse the membrane as a helical segment. Residues 94–110 (TSIVQHHHWPFGGAACS) are Extracellular-facing. An intrachain disulfide couples Cys109 to Cys188. Residues 111–132 (ILPSLILLNMYASILLLATISA) form a helical membrane-spanning segment. Over 133–153 (DRFLLVFKPIWCQNFRGAGLA) the chain is Cytoplasmic. The chain crosses the membrane as a helical span at residues 154–174 (WIACAVAWGLALLLTIPSFLY). The Extracellular segment spans residues 175–200 (RVVREEYFPPKVLCGVDYSHDKRRER). A helical transmembrane segment spans residues 201–226 (AVAIVRLVLGFLWPLLTLMICYTFIL). Over 227-242 (LRTWSRRATRSTKTLK) the chain is Cytoplasmic. Residues 243 to 265 (VVVAVVASFFIFWLPYQVTGIMM) traverse the membrane as a helical segment. Over 266–282 (SFLEPSSPTFRLLKKLD) the chain is Extracellular. A helical membrane pass occupies residues 283-303 (SLCVSFAYINCCINPIIYVVA). Residues 304 to 350 (GQGFQGRLQKSLPSLLRNVLTEESVVRESKSFARSTVDTMADKTQAV) lie on the Cytoplasmic side of the membrane. Residues Ser314, Ser317, Ser327, Ser332, Ser334, and Ser338 each carry the phosphoserine modification.

This sequence belongs to the G-protein coupled receptor 1 family. Homodimer. May also form higher-order oligomers. Interacts (when phosphorylated) with ARRB1 and ARRB2; the interaction is associated with internalization of C5aR. Interacts (via N-terminal domain) with S.aureus chemotaxis inhibitory protein (CHIPS); the interaction blocks the receptor and may thus inhibit the immune response. Sulfation plays a critical role in the association of C5aR with C5a, but no significant role in the ability of the receptor to transduce a signal and mobilize calcium in response to a small peptide agonist. Sulfation at Tyr-14 is important for CHIPS binding. Post-translationally, phosphorylated on serine residues in response to C5a binding, resulting in internalization of the receptor and short-term desensitization to C5a.

The protein localises to the cell membrane. The protein resides in the cytoplasmic vesicle. Receptor for the chemotactic and inflammatory peptide anaphylatoxin C5a. The ligand interacts with at least two sites on the receptor: a high-affinity site on the extracellular N-terminus, and a second site in the transmembrane region which activates downstream signaling events. Receptor activation stimulates chemotaxis, granule enzyme release, intracellular calcium release and superoxide anion production. In Pan troglodytes (Chimpanzee), this protein is C5a anaphylatoxin chemotactic receptor 1 (C5AR1).